Consider the following 203-residue polypeptide: MAPTFYHYHPLPMDQKEPGCGIRWRCLAAASVLILVALVIPLIIFAVKANSEACRDGLRAQEECSNTTRLLQRQLTRSQDNLAQAEAQASTCNRTVVTLQDSLEKKVSQIQEKQALIQEQEAQIKEQEAQIKEQEAQIKEQKAHIQEQQVRIQKLEGEVEEFEQKLKKLRTAEEASITSKQNSAGSMAVSSLLVLAVPLFLLF.

The Cytoplasmic portion of the chain corresponds to 1-26 (MAPTFYHYHPLPMDQKEPGCGIRWRC). Residues 27–47 (LAAASVLILVALVIPLIIFAV) form a helical; Signal-anchor for type II membrane protein membrane-spanning segment. Residues 48-183 (KANSEACRDG…EASITSKQNS (136 aa)) lie on the Extracellular side of the membrane. 2 N-linked (GlcNAc...) asparagine glycosylation sites follow: Asn66 and Asn93. Positions 66-178 (NTTRLLQRQL…LRTAEEASIT (113 aa)) form a coiled coil. Ser183 is lipidated: GPI-anchor amidated serine. The propeptide at 184–203 (AGSMAVSSLLVLAVPLFLLF) is removed in mature form.

As to quaternary structure, parallel homodimer; disulfide-linked. May form homotetramers under reducing conditions. Isoform 1 and isoform 2 form homodimers and also heterodimers with each other. Dimerization is essential for its antiviral activity. Interacts (via cytoplasmic domain) with ARHGAP44. Interacts with MMP14 (via C-terminal cytoplasmic tail). Interacts with LILRA4/ILT7. Interacts with RNF115. Post-translationally, the GPI anchor is essential for its antiviral activity.

It is found in the golgi apparatus. Its subcellular location is the trans-Golgi network. The protein localises to the cell membrane. The protein resides in the late endosome. It localises to the membrane raft. It is found in the cytoplasm. Its subcellular location is the apical cell membrane. IFN-induced antiviral host restriction factor which efficiently blocks the release of diverse mammalian enveloped viruses by directly tethering nascent virions to the membranes of infected cells. Acts as a direct physical tether, holding virions to the cell membrane and linking virions to each other. The tethered virions can be internalized by endocytosis and subsequently degraded or they can remain on the cell surface. In either case, their spread as cell-free virions is restricted. Its target viruses belong to diverse families, including retroviridae: human immunodeficiency virus type 1 (HIV-1), mouse mammary tumor virus (MMTV) and murine leukemia virus (MLV), filoviridae: ebola virus (EBOV), arenaviridae: lassa virus (LASV), and rhabdoviridae: vesicular stomatitis virus (VSV). Can inhibit cell surface proteolytic activity of MMP14 causing decreased activation of MMP15 which results in inhibition of cell growth and migration. Can stimulate signaling by LILRA4/ILT7 and consequently provide negative feedback to the production of IFN by plasmacytoid dendritic cells in response to viral infection. Plays a role in the organization of the subapical actin cytoskeleton in polarized epithelial cells. The sequence is that of Bone marrow stromal antigen 2 (Bst2) from Cricetulus griseus (Chinese hamster).